The following is a 569-amino-acid chain: Tetratricopeptide repeat protein 22 (569 aa).

TPR repeat units follow at residues 66–99, 101–133, 203–237, 260–294, 295–328, 383–418, and 432–465; these read PAVR…HPGN, NAWA…MGLA, ATLY…LRQV, KDTF…AKNQ, PPIL…LRDP, FKAY…ALVF, and PELQ…DDAG.

In Homo sapiens (Human), this protein is Tetratricopeptide repeat protein 22 (TTC22).